The chain runs to 900 residues: E3 ubiquitin-protein ligase BRE1-like 2 (900 aa).

A disordered region spans residues 1-31; sequence MENQESDEPMQKKPHLLDSVSPNSMARNSSP. Over residues 20-31 the composition is skewed to polar residues; it reads VSPNSMARNSSP. Coiled-coil stretches lie at residues 63–96, 217–300, 437–660, and 706–737; these read TVLQ…LQLN, EDAT…KDAA, SRIE…AEME, and SEKQ…EQMK. The segment at 848-887 adopts an RING-type zinc-finger fold; sequence CGVCFDRPKEVVIVKCYHLFCQQCIQRSLEIRHRKCPGCG.

This sequence belongs to the BRE1 family. May act as a tetramer consisting of two copies of HUB1 and two copies of HUB2. As to expression, ubiquitously expressed.

Its subcellular location is the nucleus. It catalyses the reaction S-ubiquitinyl-[E2 ubiquitin-conjugating enzyme]-L-cysteine + [acceptor protein]-L-lysine = [E2 ubiquitin-conjugating enzyme]-L-cysteine + N(6)-ubiquitinyl-[acceptor protein]-L-lysine.. It functions in the pathway protein modification; protein ubiquitination. Its function is as follows. E3 ubiquitin-protein ligase that monoubiquitinates H2B to form H2BK143ub1. H2BK143ub1 gives a specific tag for epigenetic transcriptional activation and is also prerequisite for H3K4me and maybe H3K79me. It thereby plays a central role in histone code and gene regulation. Forms a ubiquitin ligase complex in cooperation with the E2 enzyme UBC2/RAD6. The protein is E3 ubiquitin-protein ligase BRE1-like 2 (HUB2) of Arabidopsis thaliana (Mouse-ear cress).